The primary structure comprises 825 residues: Heterogeneous nuclear ribonucleoprotein U (825 aa).

Residue S2 is modified to N-acetylserine; partial. Position 4 is a phosphoserine (S4). One can recognise an SAP domain in the interval 8-42 (VKKLKVSELKEELKKRRLSDKGLKAELMERLQAAL). Residues K17 and K21 each carry the N6-acetyllysine modification. The segment at 41-281 (ALDDEEAGGR…PQPPVEEEDE (241 aa)) is disordered. The residue at position 59 (S59) is a Phosphoserine; by PLK1. S66 bears the Phosphoserine mark. The segment covering 72–81 (AGLEQEAAAG) has biased composition (low complexity). Acidic residues-rich tracts occupy residues 82–95 (GDEE…EEEG), 120–134 (PMEE…ENGD), and 140–153 (EGED…EGAG). The segment covering 159–178 (GEQQPQPPATQQQQPQQQRG) has biased composition (low complexity). K186 carries the N6-acetyllysine modification. S187 carries the post-translational modification ADP-ribosylserine. Over residues 199–211 (APPGARQGQQQAG) the composition is skewed to low complexity. K215 carries the N6-acetyllysine modification. Basic and acidic residues predominate over residues 233-266 (GKTEQKGGDKKRGVKRPREDHGRGYFEYIEENKY). R255 is modified (citrulline). N6-acetyllysine; alternate is present on K265. K265 participates in a covalent cross-link: Glycyl lysine isopeptide (Lys-Gly) (interchain with G-Cter in SUMO1); alternate. Residue K265 forms a Glycyl lysine isopeptide (Lys-Gly) (interchain with G-Cter in SUMO2); alternate linkage. A Phosphotyrosine modification is found at Y266. S267 and S271 each carry phosphoserine. Residues 267–464 (SRAKSPQPPV…VEFNFGQKEK (198 aa)) form the B30.2/SPRY domain. T286 carries the phosphothreonine modification. K352 carries the N6-acetyllysine modification. Residues 488-672 (PKGPEEKKDC…QKLLEQYKEE (185 aa)) form an ATPase domain region. A Glycyl lysine isopeptide (Lys-Gly) (interchain with G-Cter in SUMO2) cross-link involves residue K495. 504–511 (GLPGAGKT) contributes to the ATP binding site. N6-acetyllysine; alternate is present on residues K516 and K524. Glycyl lysine isopeptide (Lys-Gly) (interchain with G-Cter in SUMO2); alternate cross-links involve residues K516 and K524. T532 is modified (phosphothreonine). Residue K536 forms a Glycyl lysine isopeptide (Lys-Gly) (interchain with G-Cter in SUMO2) linkage. K551 is modified (N6-acetyllysine). An N6-acetyllysine; alternate modification is found at K565. Residue K565 forms a Glycyl lysine isopeptide (Lys-Gly) (interchain with G-Cter in SUMO2); alternate linkage. K574 participates in a covalent cross-link: Glycyl lysine isopeptide (Lys-Gly) (interchain with G-Cter in SUMO2). The residue at position 582 (T582) is a Phosphothreonine. Residues K609 and K626 each participate in a glycyl lysine isopeptide (Lys-Gly) (interchain with G-Cter in SUMO2) cross-link. The interval 611 to 626 (EDYKQRTQKKAEVEGK) is actin-binding. K635 is modified (N6-acetyllysine; alternate). K635 is covalently cross-linked (Glycyl lysine isopeptide (Lys-Gly) (interchain with G-Cter in SUMO2); alternate). Glycyl lysine isopeptide (Lys-Gly) (interchain with G-Cter in SUMO2) cross-links involve residues K664 and K670. The segment covering 671-683 (EESKKALPPEKKQ) has biased composition (basic and acidic residues). A disordered region spans residues 671-749 (EESKKALPPE…GGGGGGSGGI (79 aa)). R702 is subject to Omega-N-methylarginine. Residues 710-728 (GGFNMRGGNFRGGAPGNRG) show a composition bias toward gly residues. Positions 714–739 (MRGGNFRGGAPGNRGGYNRRGNMPQR) are RNA-binding RGG-box. Asymmetric dimethylarginine occurs at positions 715, 720, and 727. Asymmetric dimethylarginine; alternate occurs at positions 733 and 739. 2 positions are modified to omega-N-methylarginine; alternate: R733 and R739. R739 carries the post-translational modification Dimethylated arginine; in A2780 ovarian carcinoma cell line. Positions 739–749 (RGGGGGGSGGI) are enriched in gly residues. Residues R755 and R762 each carry the asymmetric dimethylarginine modification. Residues 769–799 (GNYNRGGMPNRGNYNQNFRGRGNNRGYKNQS) are disordered. Residues 778 to 799 (NRGNYNQNFRGRGNNRGYKNQS) are compositionally biased toward low complexity. At K814 the chain carries N6-acetyllysine; alternate. K814 participates in a covalent cross-link: Glycyl lysine isopeptide (Lys-Gly) (interchain with G-Cter in SUMO2); alternate.

Oligomer (via ATPase domain and RNA-binding RGG-box region); oligomerization occurs upon ATP-binding in a chromatin-associated RNAs (caRNAs)- and transcription-dependent manner and is required for chromatin decompaction. ATP hydrolysis is required to cycle from an oligomeric to monomeric state to compact chromatin. Component of the coding region determinant (CRD)-mediated complex, composed of DHX9, HNRNPU, IGF2BP1, SYNCRIP and YBX1. Identified in the spliceosome C complex. Identified in a IGF2BP1-dependent mRNP granule complex containing untranslated mRNAs. Associates with heterogeneous nuclear ribonucleoprotein (hnRNP) particles. Associates (via middle region) with the C-terminal domain (CTD) RNA polymerase II (Pol II) holoenzyme; this association occurs in a RNA-independent manner. Associates (via middle region) with the core-TFIIH basal transcription factor complex; this association inhibits the CTD phosphorylation of RNA polymerase II holoenzyme by down-regulating TFIIH kinase activity. Associates with the telomerase holoenzyme complex. Associates with spindle microtubules (MTs) in a TPX2-dependent manner. Interacts (via C-terminus) with actin; this interaction is direct and mediates association with the phosphorylated CTD of RNA polymerase II and is disrupted in presence of the long non-coding H19 RNA. Interacts with AURKA. Interacts (via C-terminus) with CBX5; this interaction is, at least in part, RNA-dependent. Interacts with CR2. Interacts with CRY1. Interacts (via C-terminus) with EP300; this interaction enhances DNA-binding to nuclear scaffold/matrix attachment region (S/MAR) elements. Interacts with ERBB4. Interacts with GEMIN5. Interacts with IGF2BP1. Interacts with IGF2BP2 and IGF2BP3. Interacts with NCL; this interaction occurs during mitosis. Interacts (via C-terminus) with NR3C1 (via C-terminus). Interacts with PLK1; this interaction induces phosphorylation of HNRNPU at Ser-59 in mitosis. Interacts with POU3F4. Interacts with SMARCA4; this interaction occurs in embryonic stem cells and stimulates global Pol II-mediated transcription. Interacts (via C-terminus) with TOP2A; this interaction protects the topoisomerase TOP2A from degradation and positively regulates the relaxation of supercoiled DNA by TOP2A in a RNA-dependent manner. Interacts with TPX2; this interaction recruits HNRNPU to spindle microtubules (MTs). Interacts with UBQLN2. Interacts (via RNA-binding RGG-box region) with ZBTB7B; the interaction facilitates the recruitment of long non-coding RNA Blnc1 by ZBTB7B. Interacts with ERCC6. As to quaternary structure, (Microbial infection) Interacts with HIV-1 protein Rev. Post-translationally, cleaved at Asp-100 by CASP3 during T-cell apoptosis, resulting in a loss of DNA- and chromatin-binding activities. Extensively phosphorylated. Phosphorylated on Ser-59 by PLK1 and dephosphorylated by protein phosphatase 2A (PP2A) in mitosis. In terms of processing, arg-739 is dimethylated, probably to asymmetric dimethylarginine. Arg-733 is dimethylated, probably to asymmetric dimethylarginine. Post-translationally, citrullinated by PADI4. As to expression, widely expressed.

The protein resides in the nucleus. Its subcellular location is the nucleus matrix. It is found in the chromosome. The protein localises to the nucleus speckle. It localises to the cytoplasm. The protein resides in the cytoskeleton. Its subcellular location is the microtubule organizing center. It is found in the centrosome. The protein localises to the centromere. It localises to the kinetochore. The protein resides in the spindle. Its subcellular location is the spindle pole. It is found in the midbody. The protein localises to the cell surface. It localises to the cytoplasmic granule. DNA- and RNA-binding protein involved in several cellular processes such as nuclear chromatin organization, telomere-length regulation, transcription, mRNA alternative splicing and stability, Xist-mediated transcriptional silencing and mitotic cell progression. Plays a role in the regulation of interphase large-scale gene-rich chromatin organization through chromatin-associated RNAs (caRNAs) in a transcription-dependent manner, and thereby maintains genomic stability. Required for the localization of the long non-coding Xist RNA on the inactive chromosome X (Xi) and the subsequent initiation and maintenance of X-linked transcriptional gene silencing during X-inactivation. Plays a role as a RNA polymerase II (Pol II) holoenzyme transcription regulator. Promotes transcription initiation by direct association with the core-TFIIH basal transcription factor complex for the assembly of a functional pre-initiation complex with Pol II in a actin-dependent manner. Blocks Pol II transcription elongation activity by inhibiting the C-terminal domain (CTD) phosphorylation of Pol II and dissociates from Pol II pre-initiation complex prior to productive transcription elongation. Positively regulates CBX5-induced transcriptional gene silencing and retention of CBX5 in the nucleus. Negatively regulates glucocorticoid-mediated transcriptional activation. Key regulator of transcription initiation and elongation in embryonic stem cells upon leukemia inhibitory factor (LIF) signaling. Involved in the long non-coding RNA H19-mediated Pol II transcriptional repression. Participates in the circadian regulation of the core clock component BMAL1 transcription. Plays a role in the regulation of telomere length. Plays a role as a global pre-mRNA alternative splicing modulator by regulating U2 small nuclear ribonucleoprotein (snRNP) biogenesis. Plays a role in mRNA stability. Component of the CRD-mediated complex that promotes MYC mRNA stabilization. Enhances the expression of specific genes, such as tumor necrosis factor TNFA, by regulating mRNA stability, possibly through binding to the 3'-untranslated region (UTR). Plays a role in mitotic cell cycle regulation. Involved in the formation of stable mitotic spindle microtubules (MTs) attachment to kinetochore, spindle organization and chromosome congression. Phosphorylation at Ser-59 by PLK1 is required for chromosome alignement and segregation and progression through mitosis. Also contributes to the targeting of AURKA to mitotic spindle MTs. Binds to double- and single-stranded DNA and RNA, poly(A), poly(C) and poly(G) oligoribonucleotides. Binds to chromatin-associated RNAs (caRNAs). Associates with chromatin to scaffold/matrix attachment region (S/MAR) elements in a chromatin-associated RNAs (caRNAs)-dependent manner. Binds to the Xist RNA. Binds the long non-coding H19 RNA. Binds to SMN1/2 pre-mRNAs at G/U-rich regions. Binds to small nuclear RNAs (snRNAs). Binds to the 3'-UTR of TNFA mRNA. Binds (via RNA-binding RGG-box region) to the long non-coding Xist RNA; this binding is direct and bridges the Xist RNA and the inactive chromosome X (Xi). Also negatively regulates embryonic stem cell differentiation upon LIF signaling. Required for embryonic development. Binds to brown fat long non-coding RNA 1 (Blnc1); facilitates the recruitment of Blnc1 by ZBTB7B required to drive brown and beige fat development and thermogenesis. In terms of biological role, (Microbial infection) Negatively regulates immunodeficiency virus type 1 (HIV-1) replication by preventing the accumulation of viral mRNA transcripts in the cytoplasm. In Homo sapiens (Human), this protein is Heterogeneous nuclear ribonucleoprotein U.